The sequence spans 985 residues: Alanine--tRNA ligase, mitochondrial (985 aa).

A mitochondrion-targeting transit peptide spans 1 to 23 (MAASVAAAAGRLRRAIGRSCPWQ). Residues Arg105, His123, Trp205, and 235–237 (LWN) each bind ATP. 2 residues coordinate L-alanine: Asn237 and Asp260. Gly264 lines the ATP pocket. Zn(2+)-binding residues include His632, His636, Cys749, and His753.

The protein belongs to the class-II aminoacyl-tRNA synthetase family. Monomer. It depends on Zn(2+) as a cofactor.

It localises to the mitochondrion. It carries out the reaction tRNA(Ala) + L-alanine + ATP = L-alanyl-tRNA(Ala) + AMP + diphosphate. The catalysed reaction is (S)-lactate + ATP + H(+) = (S)-lactoyl-AMP + diphosphate. It catalyses the reaction (S)-lactoyl-AMP + L-lysyl-[protein] = N(6)-[(S)-lactoyl]-L-lysyl-[protein] + AMP + 2 H(+). In terms of biological role, catalyzes the attachment of alanine to tRNA(Ala) in a two-step reaction: alanine is first activated by ATP to form Ala-AMP and then transferred to the acceptor end of tRNA(Ala). Also edits incorrectly charged tRNA(Ala) via its editing domain. In presence of high levels of lactate, also acts as a protein lactyltransferase that mediates lactylation of lysine residues in target proteins, such as CGAS. Acts as an inhibitor of cGAS/STING signaling by catalyzing lactylation of CGAS, preventing the formation of liquid-like droplets in which CGAS is activated. This Rattus norvegicus (Rat) protein is Alanine--tRNA ligase, mitochondrial (Aars2).